The sequence spans 145 residues: MPFDLLTVLFTRLDVEVNGFNGGVLNGVPSAYHWYTEQYGVKGPCGYEVNISSQGDNFIQVDFDTPWCQPESDVIAVLSRRFSCTLEHWYAEQGCNFCGWQRYERGELVDVLWGELEWSSPTDDDELPEVTAPEWIVDKVAHYGG.

This is an uncharacterized protein from Escherichia coli (strain K12).